Here is a 649-residue protein sequence, read N- to C-terminus: Drebrin (649 aa).

Alanine 2 carries the post-translational modification N-acetylalanine. Residues glycine 3 to serine 134 enclose the ADF-H domain. A phosphoserine mark is found at serine 141 and serine 142. Basic and acidic residues-rich tracts occupy residues glutamine 208–arginine 236 and aspartate 288–glutamate 298. 3 disordered regions span residues glutamine 208–aspartate 420, aspartate 477–threonine 502, and glutamate 538–valine 620. Residues threonine 331 and threonine 335 each carry the phosphothreonine modification. Positions proline 334–valine 348 are enriched in polar residues. Phosphoserine occurs at positions 337, 339, and 345. Residue threonine 346 is modified to Phosphothreonine. Residues glutamine 363–alanine 374 show a composition bias toward pro residues. Serine 416 carries the phosphoserine modification. Threonine 497 carries the phosphothreonine modification. Over residues asparagine 582–serine 594 the composition is skewed to polar residues. Residue serine 601 is modified to Phosphoserine.

As to quaternary structure, interacts with RUFY3. Interacts with CXCR4; this interaction is enhanced by antigenic stimulation. Interacts (via ADF-H domain) with ZMYND8 (via N-terminus); the interaction leads to sequestering of ZMYND8 in the cytoplasm. Expressed in the brain, with expression in the molecular layer of the dentate gyrus, stratum pyramidale, and stratum radiatum of the hippocampus (at protein level). Also expressed in the terminal varicosities distributed along dendritic trees of pyramidal cells in CA4 and CA3 of the hippocampus (at protein level). Expressed in pyramidal cells in CA2, CA1 and the subiculum of the hippocampus (at protein level). Expressed in peripheral blood lymphocytes, including T-cells (at protein level). Expressed in the brain. Expressed in the heart, placenta, lung, skeletal muscle, kidney, pancreas, skin fibroblasts, gingival fibroblasts and bone-derived cells.

Its subcellular location is the cytoplasm. The protein resides in the cell projection. The protein localises to the dendrite. It localises to the cell cortex. It is found in the cell junction. Its subcellular location is the growth cone. Functionally, actin cytoskeleton-organizing protein that plays a role in the formation of cell projections. Required for actin polymerization at immunological synapses (IS) and for the recruitment of the chemokine receptor CXCR4 to IS. Plays a role in dendritic spine morphogenesis and organization, including the localization of the dopamine receptor DRD1 to the dendritic spines. Involved in memory-related synaptic plasticity in the hippocampus. The sequence is that of Drebrin (DBN1) from Homo sapiens (Human).